A 434-amino-acid chain; its full sequence is Tungsten-containing formylmethanofuran dehydrogenase 2 subunit B (434 aa).

Residue selenocysteine 120 is a non-standard amino acid, selenocysteine.

This sequence belongs to the FwdB family. This enzyme is composed of six subunits FwdA, FwdC, FwdD, FwdE, FwdF and FwdG. The cofactor is W-bis(molybdopterin guanine dinucleotide).

The catalysed reaction is N-formylmethanofuran + 2 oxidized [2Fe-2S]-[ferredoxin] + H2O = methanofuran + 2 reduced [2Fe-2S]-[ferredoxin] + CO2 + H(+). Its pathway is one-carbon metabolism; methanogenesis from CO(2); 5,10-methenyl-5,6,7,8-tetrahydromethanopterin from CO(2): step 1/3. In terms of biological role, catalyzes the reversible oxidation of CO(2) and methanofuran (MFR) to N-formylmethanofuran (CHO-MFR). This enzyme is oxygen-labile. This chain is Tungsten-containing formylmethanofuran dehydrogenase 2 subunit B (fwdB), found in Methanococcus maripaludis (strain DSM 14266 / JCM 13030 / NBRC 101832 / S2 / LL).